A 544-amino-acid polypeptide reads, in one-letter code: Histone-arginine methyltransferase CARMER (544 aa).

The SAM-dependent MTase PRMT-type domain maps to 150-459; the sequence is ASQYFQFYGY…QSYDVTIDLH (310 aa). Gln-163, Arg-172, Gly-196, Glu-218, Glu-247, and Thr-275 together coordinate S-adenosyl-L-methionine. A compositionally biased stretch (polar residues) spans 505–520; the sequence is DTQQQQQGSRNSNSML. Residues 505–527 form a disordered region; it reads DTQQQQQGSRNSNSMLNGGLSVN. Arg-514 carries the asymmetric dimethylarginine; by autocatalysis modification.

Belongs to the class I-like SAM-binding methyltransferase superfamily. Protein arginine N-methyltransferase family. In terms of assembly, homodimer. The dimethylated protein is the major form.

It localises to the cytoplasm. The protein resides in the nucleus. The enzyme catalyses L-arginyl-[protein] + 2 S-adenosyl-L-methionine = N(omega),N(omega)-dimethyl-L-arginyl-[protein] + 2 S-adenosyl-L-homocysteine + 2 H(+). Functionally, methylates (mono- and asymmetric dimethylation) the guanidino nitrogens of arginyl residues in proteins. May methylate histone H3 at 'Arg-17' and activate transcription via chromatin remodeling. The sequence is that of Histone-arginine methyltransferase CARMER (Art4) from Drosophila grimshawi (Hawaiian fruit fly).